Consider the following 423-residue polypeptide: Glutamyl-tRNA reductase (423 aa).

Residues 51-54 (TCNR), Ser99, 104-106 (EDQ), and Gln110 contribute to the substrate site. Cys52 serves as the catalytic Nucleophile. 179 to 184 (GSGEMG) is a binding site for NADP(+).

It belongs to the glutamyl-tRNA reductase family. As to quaternary structure, homodimer.

The enzyme catalyses (S)-4-amino-5-oxopentanoate + tRNA(Glu) + NADP(+) = L-glutamyl-tRNA(Glu) + NADPH + H(+). It functions in the pathway porphyrin-containing compound metabolism; protoporphyrin-IX biosynthesis; 5-aminolevulinate from L-glutamyl-tRNA(Glu): step 1/2. Its function is as follows. Catalyzes the NADPH-dependent reduction of glutamyl-tRNA(Glu) to glutamate 1-semialdehyde (GSA). The protein is Glutamyl-tRNA reductase of Methanoculleus marisnigri (strain ATCC 35101 / DSM 1498 / JR1).